The primary structure comprises 415 residues: Putative FNIP repeat-containing protein L415 (415 aa).

The FNIP repeat unit spans residues 148 to 185; the sequence is FIKKGAIPDSVTHLYFGSDYLSKDIIPKNVVYLRFGDF.

The polypeptide is Putative FNIP repeat-containing protein L415 (Acanthamoeba polyphaga mimivirus (APMV)).